A 389-amino-acid chain; its full sequence is MSEYLFTSESVSEGHPDKVADQVSDAILDAILAQDPKARVAAETLVNTGLCVLAGEITTTAQVDYIKVARETIKRIGYNSSELGFDANGCAVGVYYDQQSPDIAQGVNEGEGIDLNQGAGDQGLMFGYACDETPTLMPFAIYYSHRLMQRQSELRKDGRLPWLRPDAKAQLTVVYDSETGKVKRIDTVVLSTQHDPAISHEELSKAVIEQIIKPVLPPELLTDETKYLINPTGRFVIGGPQGDCGLTGRKIIVDTYGGAAPHGGGAFSGKDPSKVDRSAAYACRYVAKNIVAAGLATQCQIQVSYAIGVAEPTSISIDTFGTGKISEEKLIALVCEHFDLRPKGIVQMLDLLRPIYGKSAAYGHFGREEPEFTWERTDKAASLKAAAGL.

An ATP-binding site is contributed by H15. D17 serves as a coordination point for Mg(2+). Residue E43 participates in K(+) binding. L-methionine contacts are provided by E56 and Q99. The segment at 99 to 109 is flexible loop; the sequence is QSPDIAQGVNE. ATP contacts are provided by residues 166–168, 234–235, D243, 249–250, A266, and K270; these read DAK, RF, and RK. D243 provides a ligand contact to L-methionine. K274 serves as a coordination point for L-methionine.

The protein belongs to the AdoMet synthase family. Homotetramer; dimer of dimers. The cofactor is Mg(2+). K(+) serves as cofactor.

Its subcellular location is the cytoplasm. It carries out the reaction L-methionine + ATP + H2O = S-adenosyl-L-methionine + phosphate + diphosphate. It participates in amino-acid biosynthesis; S-adenosyl-L-methionine biosynthesis; S-adenosyl-L-methionine from L-methionine: step 1/1. Functionally, catalyzes the formation of S-adenosylmethionine (AdoMet) from methionine and ATP. The overall synthetic reaction is composed of two sequential steps, AdoMet formation and the subsequent tripolyphosphate hydrolysis which occurs prior to release of AdoMet from the enzyme. The chain is S-adenosylmethionine synthase from Neisseria gonorrhoeae (strain NCCP11945).